The sequence spans 284 residues: Steroidogenic acute regulatory protein, mitochondrial (284 aa).

The transit peptide at 1–62 (MLLATFKLCA…RRSSLLGSQL (62 aa)) directs the protein to the mitochondrion. Phosphoserine; by PKA occurs at positions 56 and 194. Residues 66–279 (LYSDQELSYI…LRKRLESSPA (214 aa)) enclose the START domain.

In terms of assembly, may interact with TSPO.

The protein resides in the mitochondrion. It carries out the reaction cholesterol(in) = cholesterol(out). It functions in the pathway steroid metabolism; cholesterol metabolism. Functionally, plays a key role in steroid hormone synthesis by enhancing the metabolism of cholesterol into pregnenolone. Mediates the transfer of cholesterol from the outer mitochondrial membrane to the inner mitochondrial membrane where it is cleaved to pregnenolone. In Rattus norvegicus (Rat), this protein is Steroidogenic acute regulatory protein, mitochondrial (Star).